The following is a 539-amino-acid chain: 3-methylmercaptopropionyl-CoA ligase (539 aa).

Residue T185 participates in Mg(2+) binding. The ATP site is built by H231, G303, H324, A325, and S329. Mg(2+) is bound at residue E330. ATP contacts are provided by Q359, D417, R432, and K523.

The protein belongs to the ATP-dependent AMP-binding enzyme family. Homodimer. The cofactor is Mg(2+).

The enzyme catalyses 3-(methylsulfanyl)propanoate + ATP + CoA = 3-(methylsulfanyl)propanoyl-CoA + AMP + diphosphate. With respect to regulation, ADP acts as a competitive inhibitor and inhibits the ligase activity. In terms of biological role, involved in the assimilation of dimethylsulphoniopropionate (DMSP), an important compound in the fixation of carbon in marine phytoplankton. Catalyzes the ATP-dependent ligation of methylmercaptopropionate (MMPA) and CoA to yield methylmercaptopropionate-CoA (MMPA-CoA). The polypeptide is 3-methylmercaptopropionyl-CoA ligase (Ruegeria lacuscaerulensis (strain DSM 11314 / KCTC 2953 / ITI-1157) (Silicibacter lacuscaerulensis)).